Here is a 379-residue protein sequence, read N- to C-terminus: 3-isopropylmalate dehydrogenase 1 (379 aa).

Positions 101, 111, 139, and 230 each coordinate substrate. Residues aspartate 230, aspartate 254, and aspartate 258 each coordinate Mg(2+). 293-305 (GSAPDIAGKGIAN) lines the NAD(+) pocket.

Belongs to the isocitrate and isopropylmalate dehydrogenases family. LeuB type 1 subfamily. As to quaternary structure, homodimer. It depends on Mg(2+) as a cofactor. The cofactor is Mn(2+).

It localises to the cytoplasm. It carries out the reaction (2R,3S)-3-isopropylmalate + NAD(+) = 4-methyl-2-oxopentanoate + CO2 + NADH. It participates in amino-acid biosynthesis; L-leucine biosynthesis; L-leucine from 3-methyl-2-oxobutanoate: step 3/4. Catalyzes the oxidation of 3-carboxy-2-hydroxy-4-methylpentanoate (3-isopropylmalate) to 3-carboxy-4-methyl-2-oxopentanoate. The product decarboxylates to 4-methyl-2 oxopentanoate. In Bradyrhizobium diazoefficiens (strain JCM 10833 / BCRC 13528 / IAM 13628 / NBRC 14792 / USDA 110), this protein is 3-isopropylmalate dehydrogenase 1.